Here is a 200-residue protein sequence, read N- to C-terminus: Large ribosomal subunit protein uL4 (200 aa).

The disordered stretch occupies residues 43–71 (RAQKTRAEVSGSGKKPWRQKGTGRARSGD).

This sequence belongs to the universal ribosomal protein uL4 family. In terms of assembly, part of the 50S ribosomal subunit.

Functionally, one of the primary rRNA binding proteins, this protein initially binds near the 5'-end of the 23S rRNA. It is important during the early stages of 50S assembly. It makes multiple contacts with different domains of the 23S rRNA in the assembled 50S subunit and ribosome. In terms of biological role, forms part of the polypeptide exit tunnel. The polypeptide is Large ribosomal subunit protein uL4 (Aggregatibacter actinomycetemcomitans (Actinobacillus actinomycetemcomitans)).